We begin with the raw amino-acid sequence, 158 residues long: Succinate dehydrogenase [ubiquinone] cytochrome b small subunit B, mitochondrial (158 aa).

A mitochondrion-targeting transit peptide spans 1-29; it reads MAALVRISSLCHRGVSPLLFRPSSLIRPL. The Mitochondrial matrix segment spans residues 30-62; that stretch reads AVQQKDHDCSYLISARIHATPSNYAGSGSKAAT. Residues 63-84 traverse the membrane as a helical segment; it reads MHWTGERILSIALLSLAPVAYF. Residues 85-89 lie on the Mitochondrial intermembrane side of the membrane; sequence CPSPA. A helical membrane pass occupies residues 90–110; that stretch reads VDYSLAAALTLHGHWGLGQVV. H101 provides a ligand contact to heme b. The Mitochondrial matrix portion of the chain corresponds to 111-119; that stretch reads TDYVHGDAK. A ubiquinone is bound at residue Y113. A helical transmembrane segment spans residues 120–141; it reads IKMANAGLFVLSTVTFAGLCYF. At 142–158 the chain is on the mitochondrial intermembrane side; that stretch reads NYHDVGICKAVALLWSK.

The protein belongs to the CybS family. In terms of assembly, component of complex II composed of four subunits: the flavoprotein (FP) SDHA, iron-sulfur protein (IP) SDHB, and a cytochrome b560 composed of SDHC and SDHD.

Its subcellular location is the mitochondrion inner membrane. It participates in carbohydrate metabolism; tricarboxylic acid cycle. Membrane-anchoring subunit of succinate dehydrogenase (SDH) that is involved in complex II of the mitochondrial electron transport chain and is responsible for transferring electrons from succinate to ubiquinone (coenzyme Q). SDH also oxidizes malate to the non-canonical enol form of oxaloacetate, enol-oxaloacetate. Enol-oxaloacetate, which is a potent inhibitor of the succinate dehydrogenase activity, is further isomerized into keto-oxaloacetate. The sequence is that of Succinate dehydrogenase [ubiquinone] cytochrome b small subunit B, mitochondrial (sdhdb) from Danio rerio (Zebrafish).